Here is a 237-residue protein sequence, read N- to C-terminus: MRIAVLSGAGISAESGVPTFRDDKNGLWARFDPYELSSTQGWRDNPQRVWGWYLWRHYLVADVAPNAGHRAIAAWQDHAEVSVITQNVDDLHERAGSRPVHHLHGSLFEFRCARCAKPYTGELPAMAEPALEVQPPVCGCGGLIRPDIVWFGEQLPDEPWRRAVEATESADVMVVVGTSAIVYPAAGLAELALSRGAAVVEVNPEVTPLSASATLSIRETASQALPGLLQRLPALLN.

The region spanning 1 to 235 (MRIAVLSGAG…PGLLQRLPAL (235 aa)) is the Deacetylase sirtuin-type domain. 8–28 (GAGISAESGVPTFRDDKNGLW) is an NAD(+) binding site. Tyr-53 and Arg-56 together coordinate substrate. NAD(+) is bound at residue 86–89 (QNVD). His-104 serves as the catalytic Proton acceptor. Zn(2+) contacts are provided by Cys-112, Cys-115, Cys-138, and Cys-140. NAD(+)-binding positions include 177 to 179 (GTS), 203 to 205 (NPE), and Ala-221.

It belongs to the sirtuin family. Class III subfamily. Zn(2+) serves as cofactor.

It is found in the cytoplasm. It catalyses the reaction N(6)-acetyl-L-lysyl-[protein] + NAD(+) + H2O = 2''-O-acetyl-ADP-D-ribose + nicotinamide + L-lysyl-[protein]. The enzyme catalyses N(6)-succinyl-L-lysyl-[protein] + NAD(+) + H2O = 2''-O-succinyl-ADP-D-ribose + nicotinamide + L-lysyl-[protein]. Functionally, NAD-dependent lysine deacetylase and desuccinylase that specifically removes acetyl and succinyl groups on target proteins. Modulates the activities of several proteins which are inactive in their acylated form. In Mycolicibacterium paratuberculosis (strain ATCC BAA-968 / K-10) (Mycobacterium paratuberculosis), this protein is NAD-dependent protein deacylase.